We begin with the raw amino-acid sequence, 181 residues long: Large ribosomal subunit protein uL5 (181 aa).

Belongs to the universal ribosomal protein uL5 family. As to quaternary structure, part of the 50S ribosomal subunit; part of the 5S rRNA/L5/L18/L25 subcomplex. Contacts the 5S rRNA and the P site tRNA. Forms a bridge to the 30S subunit in the 70S ribosome.

In terms of biological role, this is one of the proteins that bind and probably mediate the attachment of the 5S RNA into the large ribosomal subunit, where it forms part of the central protuberance. In the 70S ribosome it contacts protein S13 of the 30S subunit (bridge B1b), connecting the 2 subunits; this bridge is implicated in subunit movement. Contacts the P site tRNA; the 5S rRNA and some of its associated proteins might help stabilize positioning of ribosome-bound tRNAs. This Campylobacter jejuni subsp. jejuni serotype O:6 (strain 81116 / NCTC 11828) protein is Large ribosomal subunit protein uL5.